We begin with the raw amino-acid sequence, 287 residues long: Putative B3 domain-containing protein Os08g0157700 (287 aa).

The span at 17 to 29 (ATEEEEEEEEEEQ) shows a compositional bias: acidic residues. The tract at residues 17–36 (ATEEEEEEEEEEQALGQEPA) is disordered. A DNA-binding region (TF-B3) is located at residues 71 to 168 (FDKVVTPSDV…RYFIDYRHCH (98 aa)).

The protein localises to the nucleus. The polypeptide is Putative B3 domain-containing protein Os08g0157700 (Oryza sativa subsp. japonica (Rice)).